Consider the following 504-residue polypeptide: Deoxyguanosinetriphosphate triphosphohydrolase (504 aa).

In terms of domain architecture, HD spans 66-273; sequence RLTHSLEVQQ…MEAADDISYC (208 aa).

It belongs to the dGTPase family. Type 1 subfamily. In terms of assembly, homotetramer. Mg(2+) is required as a cofactor.

It carries out the reaction dGTP + H2O = 2'-deoxyguanosine + triphosphate + H(+). In terms of biological role, dGTPase preferentially hydrolyzes dGTP over the other canonical NTPs. In Cronobacter sakazakii (strain ATCC BAA-894) (Enterobacter sakazakii), this protein is Deoxyguanosinetriphosphate triphosphohydrolase.